The following is a 216-amino-acid chain: Kynurenine formamidase (216 aa).

W25 contacts substrate. Residues H55, H59, and D61 each contribute to the Zn(2+) site. H65 functions as the Proton donor/acceptor in the catalytic mechanism. Zn(2+) contacts are provided by H167 and E179.

The protein belongs to the Cyclase 1 superfamily. KynB family. Homodimer. Requires Zn(2+) as cofactor.

The enzyme catalyses N-formyl-L-kynurenine + H2O = L-kynurenine + formate + H(+). It participates in amino-acid degradation; L-tryptophan degradation via kynurenine pathway; L-kynurenine from L-tryptophan: step 2/2. Catalyzes the hydrolysis of N-formyl-L-kynurenine to L-kynurenine, the second step in the kynurenine pathway of tryptophan degradation. In Cupriavidus taiwanensis (strain DSM 17343 / BCRC 17206 / CCUG 44338 / CIP 107171 / LMG 19424 / R1) (Ralstonia taiwanensis (strain LMG 19424)), this protein is Kynurenine formamidase.